Here is a 431-residue protein sequence, read N- to C-terminus: Serine--tRNA ligase (431 aa).

236-238 contributes to the L-serine binding site; it reads TAE. Residue 267–269 coordinates ATP; sequence RSE. E290 is a binding site for L-serine. Residue 354–357 coordinates ATP; that stretch reads EISS. Residue S389 coordinates L-serine.

It belongs to the class-II aminoacyl-tRNA synthetase family. Type-1 seryl-tRNA synthetase subfamily. As to quaternary structure, homodimer. The tRNA molecule binds across the dimer.

The protein localises to the cytoplasm. It catalyses the reaction tRNA(Ser) + L-serine + ATP = L-seryl-tRNA(Ser) + AMP + diphosphate + H(+). It carries out the reaction tRNA(Sec) + L-serine + ATP = L-seryl-tRNA(Sec) + AMP + diphosphate + H(+). Its pathway is aminoacyl-tRNA biosynthesis; selenocysteinyl-tRNA(Sec) biosynthesis; L-seryl-tRNA(Sec) from L-serine and tRNA(Sec): step 1/1. Functionally, catalyzes the attachment of serine to tRNA(Ser). Is also able to aminoacylate tRNA(Sec) with serine, to form the misacylated tRNA L-seryl-tRNA(Sec), which will be further converted into selenocysteinyl-tRNA(Sec). The chain is Serine--tRNA ligase from Janthinobacterium sp. (strain Marseille) (Minibacterium massiliensis).